The primary structure comprises 363 residues: MWIVKGILSSVVLKGHYSLFSRPPPSSLPDYALRFLHFTCCRSSKIMFSEFDSSNASISPELRQENAKALDSCYTEEQRAVILQRLNTATESELEQVKLLRGRKSVNIVKYRTRHGPFSSLESVINVPLLKYKSAIMVFDSILNPDNKRKRNKGKVHLAKFIKPDVNRAHLEDASSIISIVCGTNKIAWAHMDRARTVLDWQQAECQSFMKGTYLASDYLEDISSVISSFPAADFFLVEKPSISPQNTSLFPVMVHLRTVEAMLFALLSQAREPGSPPKVLNMMRISVGRHFDLMVGDCRTSGAETLRKMMTDSVMKRDPRVLFPHDLVLKHRNSFQMSSRNKGEEMCDALLQAVAFFELLQE.

Residues 1-23 (MWIVKGILSSVVLKGHYSLFSRP) constitute a mitochondrion transit peptide.

It belongs to the TEFM family.

It is found in the mitochondrion matrix. It localises to the mitochondrion nucleoid. Transcription elongation factor which increases mitochondrial RNA polymerase processivity. Regulates transcription of the mitochondrial genome, including genes important for the oxidative phosphorylation machinery. The protein is Transcription elongation factor, mitochondrial (tefm) of Danio rerio (Zebrafish).